The following is a 155-amino-acid chain: 3-dehydroquinate dehydratase (155 aa).

The active-site Proton acceptor is Tyr31. Positions 83, 89, and 96 each coordinate substrate. The Proton donor role is filled by His109. Residues 110 to 111 and Arg120 each bind substrate; that span reads LS.

This sequence belongs to the type-II 3-dehydroquinase family. Homododecamer.

It carries out the reaction 3-dehydroquinate = 3-dehydroshikimate + H2O. It functions in the pathway metabolic intermediate biosynthesis; chorismate biosynthesis; chorismate from D-erythrose 4-phosphate and phosphoenolpyruvate: step 3/7. Catalyzes a trans-dehydration via an enolate intermediate. The sequence is that of 3-dehydroquinate dehydratase from Laribacter hongkongensis (strain HLHK9).